The following is a 312-amino-acid chain: MCLDDKQQGMVFNIQKYSVHDGPGIRTIVFLKGCSLSCRWCSNPESQKSCAELACNPGRCIDISKCGHCLTACPHGAITCGDDDKPRIDRSHCADCSIPCAEVCPAQGLLVYGKKRAVGDVLRVVEQDMAFYARSGGGLTLSGGEPLLQGSFAVALLREARARRIRTAVETCGMVPADTVREAAPHLSYVLYDIKHMNSEIHETQTGLPNARILENFRILAEEFPHLPILARTPVIPGFNDNEKAVAAIARFIKAYPHVNYELLPYHRLGTQKYHFLGREVPMGEVSLNKAVTDGLQKTALDILGERVQIPR.

The region spanning 20-304 (HDGPGIRTIV…GLQKTALDIL (285 aa)) is the Radical SAM core domain. The [4Fe-4S] cluster site is built by Cys-34, Cys-38, Cys-41, Cys-60, Cys-66, Cys-69, Cys-73, Cys-93, Cys-96, Cys-100, and Cys-104. An S-adenosyl-L-methionine-binding site is contributed by 40-42 (WCS). 2 4Fe-4S ferredoxin-type domains span residues 51-83 (AELA…CGDD) and 84-115 (DKPR…YGKK). Residues Gly-144, 193 to 195 (DIK), and His-267 contribute to the S-adenosyl-L-methionine site.

Belongs to the organic radical-activating enzymes family. In terms of assembly, monomer. [4Fe-4S] cluster is required as a cofactor.

It catalyses the reaction glycyl-[protein] + reduced [flavodoxin] + S-adenosyl-L-methionine = glycin-2-yl radical-[protein] + semiquinone [flavodoxin] + 5'-deoxyadenosine + L-methionine + H(+). Its pathway is organosulfur degradation; alkanesulfonate degradation. Involved in an anaerobic respiration pathway that converts the sulfonate isethionate (2-hydroxyethanesulfonate) to ammonia, acetate and sulfide. Catalyzes activation of the isethionate sulfite-lyase IslA under anaerobic conditions by generation of an organic free radical on a glycine residue, via a homolytic cleavage of S-adenosyl-L-methionine (SAM). This chain is Isethionate sulfite-lyase activating enzyme, found in Desulfovibrio desulfuricans (strain ATCC 27774 / DSM 6949 / MB).